The following is a 218-amino-acid chain: MDKSESTSAGRNRRRRPRRGSRSAPSSADANFRVLSQQLSRLNKTLAAGRPTINHPTFVGSERCRPGYTFTSITLKPPKIDRGSYYGKRLLLPDSVTEYDKKLVSRIQIRVNPLPKFDSTVWVTVRKVSASSDLSVAAISAMFADGASPVLVYQYAASGVQANNKLLYDLSAMRADIGDMRKYAVLVYSKDDALETDELVLHVDIEHQRIPTSGVLPV.

Residue Met1 is modified to N-acetylmethionine; by host. The segment at 1–28 (MDKSESTSAGRNRRRRPRRGSRSAPSSA) is disordered. Basic residues predominate over residues 11–21 (RNRRRRPRRGS).

It belongs to the cucumovirus capsid protein family.

It is found in the virion. Capsid protein. Probably binds RNA and plays a role in packaging. The polypeptide is Capsid protein (Cucumber mosaic virus (strain FC) (CMV)).